A 281-amino-acid chain; its full sequence is MDQNPILIQRHHHRQNFAQKAPPAPLFLIHDGGGTVFSYFLLESLGRTVYGISNPNFETESTWENGIASMAEYYVNLIKATYPSGHILLGGWSLGGLIAIQAAHILSNDPELKVVGIVMIDSTFPVEGQFNKARRLAFMAETSTSPDMKEKTRKCMDEARIQSREWKAPSWRSSATETLDNHSQTINVQIHDHVTPTCPPTVLIRALDDGSNNSRDLNETSPTETSNDSETQALGFDRYQNFNLRYVVNTPGDHFSIFNKENVKELSKKVKEACDKLVMKS.

Residues 207–233 (LDDGSNNSRDLNETSPTETSNDSETQA) are disordered. The span at 210 to 232 (GSNNSRDLNETSPTETSNDSETQ) shows a compositional bias: polar residues.

This sequence belongs to the AMT4 thioesterase family.

It participates in mycotoxin biosynthesis. Probable thioesterase; part of the gene cluster that mediates the biosynthesis of pneumocandins, lipohexapeptides of the echinocandin family that prevent fungal cell wall formation by non-competitive inhibition of beta-1,3-glucan synthase. The 10,12-dimethylmyristoyl side chain is synthesized by the reducing polyketide synthase gloL/GLPKS4. The thioesterase gloN/GLHYD exclusively interacts with gloL/GLPKS4 to maintain turnover of the polyketide side chain. The 10R,12S-dimethylmyristic acid is then transferred to the first thiolation domain of the nonribosomal peptide synthetase gloA/GLNRPS4 by the acyl-AMP ligase gloD/GLligase, followed by its acylation to L-ornithine to trigger elongation of the cyclic hexapeptide. L-ornithine, 4R-hydroxyl-L-proline (generated from L-proline by the dioxygenase gloF/GLOXY2), 3S-hydroxyl-L-homotyrosine (generated by gloG/GLHtyB, gloH/GLHtyA, gloI/GLHtyC, gloJ/GLHtyD and hydroxylated at C-3 by the dioxygenase gloM/GLOXY1), 3R-hydroxyl-L-glutamine (generated from L-glutamine probably by the dioxygenase gloE/GLOXY3) and 3S-hydroxyl-L-proline (generated from L-proline by the dioxygenase gloF/GLOXY2 to yield pneumocandin B0), or 3S-hydroxyl-4S-methyl-L-proline (generated from L-leucine by the dioxygenase gloC/GLOXY4 to yield pneumocandin A0) are sequentially added to the growing chain. The last C domain of gloA/GLNRPS4 is proposed to be responsible for cyclization by condensation to form the peptide bond between L-ornithine and 3S-hydroxyl-4S-methyl-L-proline (for pneumocandin A0) or 3S-hydroxyl-L-proline (for pneumocandin B0). Finally, the subsequent C-4 hydroxylation of 3S-hydroxyl-L-homotyrosine and L-ornithine dihydroxylation at C-4 and C-5 are performed by the cytochrome P450 monooxygenases gloP/GLP450-1 and gloO/GLP450-2, respectively. The sequence is that of Probable thioesterase gloN from Glarea lozoyensis (strain ATCC 20868 / MF5171).